A 160-amino-acid chain; its full sequence is MSDSEEHHFESKADAGASKTYPQQAGTVRKNGFIVIKNRPCKVVEVSTSKTGKHGHAKCHFVAIDIFNGKKLEDIVPSSHNCDIPHVNRTEYQLIDISEDGFVSLLTSDGNTKDDLRLPTDETLVAQIKEGFESGKDLVVTVQSAMGEEQICALKDVGPK.

Positions 1-13 (MSDSEEHHFESKA) are enriched in basic and acidic residues. A disordered region spans residues 1–22 (MSDSEEHHFESKADAGASKTYP). A Hypusine modification is found at Lys-53.

The protein belongs to the eIF-5A family. Lys-53 undergoes hypusination, a unique post-translational modification that consists in the addition of a butylamino group from spermidine to lysine side chain, leading to the formation of the unusual amino acid hypusine. eIF-5As are the only known proteins to undergo this modification, which is essential for their function.

Its function is as follows. Translation factor that promotes translation elongation and termination, particularly upon ribosome stalling at specific amino acid sequence contexts. Binds between the exit (E) and peptidyl (P) site of the ribosome and promotes rescue of stalled ribosome: specifically required for efficient translation of polyproline-containing peptides as well as other motifs that stall the ribosome. Acts as a ribosome quality control (RQC) cofactor by joining the RQC complex to facilitate peptidyl transfer during CAT tailing step. The protein is Eukaryotic translation initiation factor 5A (TIF5A) of Zea mays (Maize).